Consider the following 470-residue polypeptide: Low molecular weight neuronal intermediate filament (470 aa).

The interval 1–91 (MTSRELYTSS…KIVRTNEKEQ (91 aa)) is head. Positions 88-399 (EKEQLQGLND…KLLEGEETRL (312 aa)) constitute an IF rod domain. Residues 91 to 123 (QLQGLNDRFVTYIEKVHHLEQQNKLLESEVTLL) form a coil 1A region. The interval 121–136 (TLLRQKHSEPSRLSHI) is linker 1. Positions 137 to 232 (YEQEIRELRS…KVHEEEIAEL (96 aa)) are coil 1B. The segment at 233-251 (QASVQEAQISVEMDVVSKP) is linker 12. The segment at 252–270 (DLTAALKEIRMQYEVLSAR) is coil 2A. Residues 271-279 (NQQSSEEWY) form a linker 2 region. The segment at 280–395 (QAKIANVSLE…AAYRKLLEGE (116 aa)) is coil 2B. Residues 396–470 (ETRLTSVGGG…EKISQKAAAN (75 aa)) are tail. Low complexity predominate over residues 414 to 431 (FSSGSYSGGRSSTTSTIS). Positions 414–470 (FSSGSYSGGRSSTTSTISIRKEEKKESPEGGKGGSSGQPKTSKPGDQEKISQKAAAN) are disordered. The span at 432–442 (IRKEEKKESPE) shows a compositional bias: basic and acidic residues.

This sequence belongs to the intermediate filament family. As to expression, nervous system; in axons in the PNS and in small perikarya in the dorsal root ganglion.

In Xenopus laevis (African clawed frog), this protein is Low molecular weight neuronal intermediate filament.